Here is a 418-residue protein sequence, read N- to C-terminus: uncharacterized protein (418 aa).

In terms of domain architecture, N-acetyltransferase spans 7-158; it reads IDVRPIAEAE…TGLDPRWSGP (152 aa). Residues 87 to 89 and 95 to 100 contribute to the acetyl-CoA site; these read VTV and RRGLLT. Catalysis depends on Y128, which acts as the Proton donor. Residue F418 is the Proton acceptor; via carboxylate of the active site.

The protein belongs to the acetyltransferase Eis family. In terms of assembly, homohexamer; trimer of dimers.

This is an uncharacterized protein from Streptomyces avermitilis (strain ATCC 31267 / DSM 46492 / JCM 5070 / NBRC 14893 / NCIMB 12804 / NRRL 8165 / MA-4680).